Consider the following 43-residue polypeptide: uncharacterized protein (43 aa).

This is an uncharacterized protein from Escherichia coli (Bacteriophage T4).